The following is a 358-amino-acid chain: Tyrosinase ustQ (358 aa).

A glycan (N-linked (GlcNAc...) asparagine) is linked at Asn28. Residues 37–57 (FVPVYAGLTIISLITVTVSLV) form a helical membrane-spanning segment. N-linked (GlcNAc...) asparagine glycans are attached at residues Asn91 and Asn109. His128 and His137 together coordinate Cu cation. N-linked (GlcNAc...) asparagine glycosylation is found at Asn172 and Asn214. Residues His266, His270, and His292 each contribute to the Cu cation site. Residues Asn321 and Asn325 are each glycosylated (N-linked (GlcNAc...) asparagine).

It belongs to the tyrosinase family. It depends on Cu(2+) as a cofactor.

It is found in the membrane. It catalyses the reaction 2 L-dopa + O2 = 2 L-dopaquinone + 2 H2O. It carries out the reaction L-tyrosine + O2 = L-dopaquinone + H2O. The protein operates within mycotoxin biosynthesis. Its function is as follows. Tyrosinase; part of the gene cluster that mediates the biosynthesis of the secondary metabolite ustiloxin B, an antimitotic tetrapeptide. First, ustA is processed by the subtilisin-like endoprotease Kex2 that is outside the ustiloxin B gene cluster, at the C-terminal side of Arg-Lys, after transfer to Golgi apparatus through the endoplasmic reticulum (ER). Cleavage by KEX2 generates 16 peptides YAIG-I to YAIG-XVI. To process the precursor peptide further, at least two peptidases are necessary to cleave the N-terminal and C-terminal sides of the Tyr-Ala-Ile-Gly core peptide which serves as backbone for the synthesis of ustiloxin B, through cyclization and modification of the tyrosine with a non-protein coding amino acid, norvaline. One of the two peptidases must be the serine peptidase ustP; and the other pepdidase is probably ustH. Macrocyclization of the core peptide derived from ustA requires the tyrosinase ustQ, as well as the homologous oxidases ustYa and ustYb, and leads to the production of the first cyclization product N-desmethylustiloxin F. For the formation of N-desmethylustiloxin F, three oxidation steps are required, hydroxylation at the benzylic position, hydroxylation at either the aromatic ring of Tyr or beta-position of Ile, and oxidative cyclization. UstQ may catalyze the oxidation of a phenol moiety, whereas the ustYa and ustYb are most likely responsible for the remaining two-step oxidations. N-desmethylustiloxin F is then methylated by ustM to yield ustiloxin F which in turn substrate of the cytochrome P450 monooxygenase ustC which catalyzes the formation of S-deoxyustiloxin H. The flavoprotein monooxygenases ustF1 and ustF2 then participate in the modification of the side chain of S-deoxyustiloxin H, leading to the synthesis of an oxime intermediate, via ustiloxin H. Finally, carboxylative dehydration performed by the cysteine desulfurase-like protein ustD yields ustiloxin B. The chain is Tyrosinase ustQ from Aspergillus flavus (strain ATCC 200026 / FGSC A1120 / IAM 13836 / NRRL 3357 / JCM 12722 / SRRC 167).